Reading from the N-terminus, the 347-residue chain is UDP-N-acetylenolpyruvoylglucosamine reductase (347 aa).

The FAD-binding PCMH-type domain occupies 33 to 221 (AGGSAERIYL…SGAWFALPRD (189 aa)). Arg-180 is a catalytic residue. Ser-250 (proton donor) is an active-site residue. Glu-320 is a catalytic residue.

Belongs to the MurB family. It depends on FAD as a cofactor.

The protein localises to the cytoplasm. It carries out the reaction UDP-N-acetyl-alpha-D-muramate + NADP(+) = UDP-N-acetyl-3-O-(1-carboxyvinyl)-alpha-D-glucosamine + NADPH + H(+). Its pathway is cell wall biogenesis; peptidoglycan biosynthesis. Its function is as follows. Cell wall formation. The sequence is that of UDP-N-acetylenolpyruvoylglucosamine reductase from Nitrosospira multiformis (strain ATCC 25196 / NCIMB 11849 / C 71).